The chain runs to 305 residues: Axin interactor, dorsalization-associated protein B (305 aa).

Residues 126 to 137 are compositionally biased toward acidic residues; that stretch reads ENLEVEEEEEDG. Residues 126–146 form a disordered region; that stretch reads ENLEVEEEEEDGGAGAGSPDL. The axin-binding stretch occupies residues 153 to 220; the sequence is GTLLPRLPSE…RKEDTYVHFN (68 aa). Residues 156–303 form the C2 Aida-type domain; it reads LPRLPSEPGM…LYLHLLQTLL (148 aa).

This sequence belongs to the AIDA family.

Functionally, acts as a ventralizing factor during embryogenesis. Inhibits axin-mediated JNK activation by binding axin and disrupting axin homodimerization. This in turn antagonizes a Wnt/beta-catenin-independent dorsalization pathway activated by axin/JNK-signaling. The chain is Axin interactor, dorsalization-associated protein B (aida-b) from Xenopus laevis (African clawed frog).